Consider the following 146-residue polypeptide: uncharacterized protein (146 aa).

The protein belongs to the BlaI transcriptional regulatory family.

This is an uncharacterized protein from Latilactobacillus sakei (Lactobacillus sakei).